The following is a 153-amino-acid chain: Endoribonuclease YbeY (153 aa).

Zn(2+) is bound by residues His116, His120, and His126.

It belongs to the endoribonuclease YbeY family. Zn(2+) serves as cofactor.

The protein localises to the cytoplasm. In terms of biological role, single strand-specific metallo-endoribonuclease involved in late-stage 70S ribosome quality control and in maturation of the 3' terminus of the 16S rRNA. The sequence is that of Endoribonuclease YbeY from Clavibacter michiganensis subsp. michiganensis (strain NCPPB 382).